Reading from the N-terminus, the 398-residue chain is MAANRRLFTSESVTEGHPDKMSDQISDAILDEILKKDPNARVACETTVTTGLVLVSGEISTSTYVDIPALVRETVKEIGYTRAKYGFDFETCAVLTAIDEQSADIAGGVNQALEARQGKMSEEEIDAIGAGDQGLMFGYACDETEELMPLPISLAHQLSKRLADVRKEGIVDYLRPDGKTQVTVEYDENDKPERIDTIVISTQHHSEIQNEQIERDMIEKVIQAVVPSELLDDKTKYFINPTGRFVIGGPQGDVGLTGRKIIVDTYGGYARHGGGAFSGKDATKVDRSAAYAARYVAKNIVAAGLAKSCEVQLAYAIGVAQPVSIAVNTFGTGKVSEDRLVEAVRELFDLRPAGIIRMLDLRKPIYKNTAAYGHFGRKDILFPWEKTDKTEELIALTK.

The interval 1-21 (MAANRRLFTSESVTEGHPDKM) is disordered. Position 17 (histidine 17) interacts with ATP. Aspartate 19 is a binding site for Mg(2+). Glutamate 45 contributes to the K(+) binding site. Glutamate 58 and glutamine 101 together coordinate L-methionine. Residues 101–111 (QSADIAGGVNQ) form a flexible loop region. ATP-binding positions include 177–179 (DGK), 244–245 (RF), aspartate 253, 259–260 (RK), alanine 276, and lysine 280. Residue aspartate 253 participates in L-methionine binding. Lysine 284 is an L-methionine binding site.

Belongs to the AdoMet synthase family. Homotetramer; dimer of dimers. It depends on Mg(2+) as a cofactor. K(+) serves as cofactor.

The protein localises to the cytoplasm. It carries out the reaction L-methionine + ATP + H2O = S-adenosyl-L-methionine + phosphate + diphosphate. The protein operates within amino-acid biosynthesis; S-adenosyl-L-methionine biosynthesis; S-adenosyl-L-methionine from L-methionine: step 1/1. Functionally, catalyzes the formation of S-adenosylmethionine (AdoMet) from methionine and ATP. The overall synthetic reaction is composed of two sequential steps, AdoMet formation and the subsequent tripolyphosphate hydrolysis which occurs prior to release of AdoMet from the enzyme. This Oceanobacillus iheyensis (strain DSM 14371 / CIP 107618 / JCM 11309 / KCTC 3954 / HTE831) protein is S-adenosylmethionine synthase.